A 184-amino-acid polypeptide reads, in one-letter code: Ribosome-recycling factor (184 aa).

Residues 141–161 are disordered; sequence KKNDKAISEDDQRKGQDDVQK.

It belongs to the RRF family.

The protein resides in the cytoplasm. Its function is as follows. Responsible for the release of ribosomes from messenger RNA at the termination of protein biosynthesis. May increase the efficiency of translation by recycling ribosomes from one round of translation to another. This is Ribosome-recycling factor from Solidesulfovibrio magneticus (strain ATCC 700980 / DSM 13731 / RS-1) (Desulfovibrio magneticus).